Here is a 39-residue protein sequence, read N- to C-terminus: Cytochrome b559 subunit beta (39 aa).

The chain crosses the membrane as a helical span at residues 14–30; sequence WLAVHGLAVPTVFFLGS. His-18 lines the heme pocket.

It belongs to the PsbE/PsbF family. Heterodimer of an alpha subunit and a beta subunit. PSII is composed of 1 copy each of membrane proteins PsbA, PsbB, PsbC, PsbD, PsbE, PsbF, PsbH, PsbI, PsbJ, PsbK, PsbL, PsbM, PsbT, PsbX, PsbY, PsbZ, Psb30/Ycf12, at least 3 peripheral proteins of the oxygen-evolving complex and a large number of cofactors. It forms dimeric complexes. Requires heme b as cofactor.

It is found in the plastid. Its subcellular location is the chloroplast thylakoid membrane. In terms of biological role, this b-type cytochrome is tightly associated with the reaction center of photosystem II (PSII). PSII is a light-driven water:plastoquinone oxidoreductase that uses light energy to abstract electrons from H(2)O, generating O(2) and a proton gradient subsequently used for ATP formation. It consists of a core antenna complex that captures photons, and an electron transfer chain that converts photonic excitation into a charge separation. The protein is Cytochrome b559 subunit beta of Adiantum capillus-veneris (Maidenhair fern).